Here is a 344-residue protein sequence, read N- to C-terminus: UDP-N-acetylenolpyruvoylglucosamine reductase (344 aa).

The 171-residue stretch at 15–185 folds into the FAD-binding PCMH-type domain; sequence LPACANQIIE…ISVGLKLAKA (171 aa). Arg-161 is a catalytic residue. Residue Ser-231 is the Proton donor of the active site. Glu-327 is a catalytic residue.

Belongs to the MurB family. FAD is required as a cofactor.

It localises to the cytoplasm. The catalysed reaction is UDP-N-acetyl-alpha-D-muramate + NADP(+) = UDP-N-acetyl-3-O-(1-carboxyvinyl)-alpha-D-glucosamine + NADPH + H(+). The protein operates within cell wall biogenesis; peptidoglycan biosynthesis. Functionally, cell wall formation. This is UDP-N-acetylenolpyruvoylglucosamine reductase from Haemophilus ducreyi (strain 35000HP / ATCC 700724).